A 292-amino-acid chain; its full sequence is Ribonuclease T2-like (292 aa).

Positions 1–23 (MAKTASAMLFLYLLLSRCLLSHA) are cleaved as a signal peptide. Disulfide bonds link C42-C61, C50-C103, C60-C177, C111-C169, and C246-C280. N-linked (GlcNAc...) asparagine glycosylation is present at N52. Active-site residues include H96, E162, and H166.

Belongs to the RNase T2 family.

It localises to the vacuole lumen. The protein localises to the cytoplasm. The catalysed reaction is a ribonucleotidyl-ribonucleotide-RNA + H2O = a 3'-end 3'-phospho-ribonucleotide-RNA + a 5'-end dephospho-ribonucleoside-RNA + H(+). Its function is as follows. Rnase which modulates cell survival under stress conditions. Released from the vacuole to the cytoplasm during stress to promote tRNA and rRNA cleavage and to activate separately a downstream pathway that promotes cell death. Involved in cell size, vacuolar morphology and growth at high temperatures and high salt concentration. The chain is Ribonuclease T2-like (RNY1) from Eremothecium gossypii (strain ATCC 10895 / CBS 109.51 / FGSC 9923 / NRRL Y-1056) (Yeast).